Reading from the N-terminus, the 329-residue chain is RNA-binding protein CP33, chloroplastic (329 aa).

The transit peptide at 1-69 (MSSAYCSSAV…NIRRHRFFCA (69 aa)) directs the protein to the chloroplast. The segment covering 77–104 (ADDEIQASVEEEEEVEEEGDEGEEEVEE) has biased composition (acidic residues). Disordered stretches follow at residues 77 to 117 (ADDE…EEGR) and 296 to 329 (SEREKPTVSPPSVEEGETEEASLESNEVLSNVSA). 2 consecutive RRM domains span residues 116-194 (GRLY…FPEV) and 219-297 (HKVY…LASE).

The protein resides in the plastid. It is found in the chloroplast. Could be involved in splicing and/or processing of chloroplast RNAs. This is RNA-binding protein CP33, chloroplastic from Arabidopsis thaliana (Mouse-ear cress).